Consider the following 474-residue polypeptide: DNA-binding protein (474 aa).

The segment at 1–34 (MAGRQREHPTVTPYLQETSPERPPPLPPKKKLRK) is disordered. Tyr-142 is modified (phosphotyrosine; by host). Zn(2+) contacts are provided by Cys-231 and His-233. The tract at residues 244–278 (VEVDVGSENGQRALKEQPSKTKVVQNRWGRSVVQI) is flexible loop. Zn(2+) contacts are provided by Cys-286, Cys-302, Cys-343, Cys-345, Cys-397, and Cys-413. Positions 460-474 (VALPTGHGDAEVEPF) are C-terminal arm, DBP binding.

This sequence belongs to the adenoviridae E2A DNA-binding protein family. In terms of assembly, homomultimerizes on viral ssDNA bound to pTP. Forms a initiation complex with viral polymerase, pTP and hosts NFIA and POU2F1/OCT1. Interacts with host SRCAP.

The protein resides in the host nucleus. In terms of biological role, plays a role in the elongation phase of viral strand displacement replication by unwinding the template in an ATP-independent fashion, employing its capacity to form multimers. Also enhances the rate of initiation. Released from template upon second strand synthesis. Assembles in complex with viral pTP, viral pol, host NFIA and host POU2F1/OCT1 on viral origin of replication. Covers the whole ssDNA genome during synthesis. The complementary strand synthesis induces its relese from DNA template. May inhibit cellular transcription mediated by the interaction between host SRCAP and CBP. The sequence is that of DNA-binding protein from Homo sapiens (Human).